A 271-amino-acid polypeptide reads, in one-letter code: Thiazole synthase (271 aa).

K95 acts as the Schiff-base intermediate with DXP in catalysis. Residues G156, 182-183 (AG), and 204-205 (NT) each bind 1-deoxy-D-xylulose 5-phosphate.

This sequence belongs to the ThiG family. As to quaternary structure, homotetramer. Forms heterodimers with either ThiH or ThiS.

The protein localises to the cytoplasm. The enzyme catalyses [ThiS sulfur-carrier protein]-C-terminal-Gly-aminoethanethioate + 2-iminoacetate + 1-deoxy-D-xylulose 5-phosphate = [ThiS sulfur-carrier protein]-C-terminal Gly-Gly + 2-[(2R,5Z)-2-carboxy-4-methylthiazol-5(2H)-ylidene]ethyl phosphate + 2 H2O + H(+). It participates in cofactor biosynthesis; thiamine diphosphate biosynthesis. Its function is as follows. Catalyzes the rearrangement of 1-deoxy-D-xylulose 5-phosphate (DXP) to produce the thiazole phosphate moiety of thiamine. Sulfur is provided by the thiocarboxylate moiety of the carrier protein ThiS. In vitro, sulfur can be provided by H(2)S. The sequence is that of Thiazole synthase from Shewanella amazonensis (strain ATCC BAA-1098 / SB2B).